The chain runs to 151 residues: UPAR/Ly6 domain-containing protein rtv (151 aa).

An N-terminal signal peptide occupies residues 1 to 19; that stretch reads MQFTSLLLAVIFLISLVSI. Over 20–125 the chain is Extracellular; that stretch reads DGLLRRCYQC…QGDLCNGARS (106 aa). 5 disulfides stabilise this stretch: Cys-26–Cys-65, Cys-29–Cys-38, Cys-60–Cys-88, Cys-100–Cys-113, and Cys-115–Cys-120. Asn-45 is a glycosylation site (N-linked (GlcNAc...) asparagine). Residue Asn-121 is the site of GPI-anchor amidated asparagine attachment. A propeptide spans 122 to 151 (removed in mature form); the sequence is GARSWSSAPQMILITMLPLLGSWLLQRMRN. The helical transmembrane segment at 126–146 threads the bilayer; it reads WSSAPQMILITMLPLLGSWLL. Over 147-151 the chain is Cytoplasmic; sequence QRMRN.

Belongs to the quiver family.

It is found in the cell membrane. Its function is as follows. Required for chitin fiber assembly and organization involved in cuticle formation and tracheal development. This chain is UPAR/Ly6 domain-containing protein rtv, found in Drosophila melanogaster (Fruit fly).